A 123-amino-acid polypeptide reads, in one-letter code: Small ribosomal subunit protein uS13 (123 aa).

The protein belongs to the universal ribosomal protein uS13 family. In terms of assembly, part of the 30S ribosomal subunit. Forms a loose heterodimer with protein S19. Forms two bridges to the 50S subunit in the 70S ribosome.

Its function is as follows. Located at the top of the head of the 30S subunit, it contacts several helices of the 16S rRNA. In the 70S ribosome it contacts the 23S rRNA (bridge B1a) and protein L5 of the 50S subunit (bridge B1b), connecting the 2 subunits; these bridges are implicated in subunit movement. Contacts the tRNAs in the A and P-sites. The chain is Small ribosomal subunit protein uS13 from Anaplasma marginale (strain St. Maries).